Consider the following 528-residue polypeptide: MSYGTINDMNESVTNYRIKKAQNNIKGWYAYSFSSEPFVVSAVSTYIPLLLQQFASINGVKVHDHSIPCLSETGSDSDKCVLGLFNNRIFVDTSSFALYVFSLSVLFQTIIVISVSGIVDLWGSVKFKGRILVWFGIVGALSTVAISKLNDTQIYSLAGLYIVANGCFGVINVVGNSLLPIFVKDSLKCQSQGAYEPDKVDSLTTVISGRGASLGYSSALIVQIVSMFLVASKKGSKQDVQVAVLFVGIWWFVWQLPMIWLIDDVTIPIRVDDSTLASARSPYPGEQDALGQLNWKNYLSYGWVSLFESFKHARLLKDVMIFLIAWFIISDSITTINSTAVLFSKAELHMSTLNLIMISVLTVVNAMLGAFMIPQFLATKFRWTSSQTLMYIIIWASFIPFYGILGFFFNAFGLKHKFEMFLLAIWYGLSLGGLSAVSRSVFSLIVPPGKESTFFSMFSITDKGSSILGPFLVGLLTDKTHNIRYSFYFFFLLLMLSLPVLNCLDVKRGRREAEELSQVLPESERRLD.

The Cytoplasmic segment spans residues 1–98 (MSYGTINDMN…IFVDTSSFAL (98 aa)). Residues 99 to 119 (YVFSLSVLFQTIIVISVSGIV) traverse the membrane as a helical segment. Topologically, residues 120–130 (DLWGSVKFKGR) are vacuolar. A helical membrane pass occupies residues 131–151 (ILVWFGIVGALSTVAISKLND). At 152–153 (TQ) the chain is on the cytoplasmic side. The helical transmembrane segment at 154–174 (IYSLAGLYIVANGCFGVINVV) threads the bilayer. The Vacuolar segment spans residues 175-210 (GNSLLPIFVKDSLKCQSQGAYEPDKVDSLTTVISGR). Residues 211 to 231 (GASLGYSSALIVQIVSMFLVA) traverse the membrane as a helical segment. Over 232-241 (SKKGSKQDVQ) the chain is Cytoplasmic. A helical transmembrane segment spans residues 242–262 (VAVLFVGIWWFVWQLPMIWLI). Residues 263 to 318 (DDVTIPIRVDDSTLASARSPYPGEQDALGQLNWKNYLSYGWVSLFESFKHARLLKD) lie on the Vacuolar side of the membrane. The residue at position 278 (Ser-278) is a Phosphoserine. The chain crosses the membrane as a helical span at residues 319-339 (VMIFLIAWFIISDSITTINST). Residues 340–352 (AVLFSKAELHMST) lie on the Cytoplasmic side of the membrane. Residues 353–373 (LNLIMISVLTVVNAMLGAFMI) form a helical membrane-spanning segment. Over 374–388 (PQFLATKFRWTSSQT) the chain is Vacuolar. The helical transmembrane segment at 389 to 409 (LMYIIIWASFIPFYGILGFFF) threads the bilayer. The Cytoplasmic portion of the chain corresponds to 410–417 (NAFGLKHK). A helical transmembrane segment spans residues 418-438 (FEMFLLAIWYGLSLGGLSAVS). Over 439-485 (RSVFSLIVPPGKESTFFSMFSITDKGSSILGPFLVGLLTDKTHNIRY) the chain is Vacuolar. A helical membrane pass occupies residues 486 to 506 (SFYFFFLLLMLSLPVLNCLDV). At 507–528 (KRGRREAEELSQVLPESERRLD) the chain is on the cytoplasmic side.

Belongs to the ATG22 family.

It is found in the vacuole membrane. Functionally, vacuolar effluxer which mediate the efflux of leucine and other amino acids resulting from autophagic degradation. The release of autophagic amino acids allows the maintenance of protein synthesis and viability during nitrogen starvation. The chain is Autophagy-related protein 22 (ATG22) from Saccharomyces cerevisiae (strain ATCC 204508 / S288c) (Baker's yeast).